We begin with the raw amino-acid sequence, 247 residues long: NAD(P)H-quinone oxidoreductase subunit K (247 aa).

[4Fe-4S] cluster is bound by residues Cys-63, Cys-64, Cys-128, and Cys-159. Residues 218-247 (TRQAPPKELTEAIGMEVPPALASQKQKEEA) are disordered.

It belongs to the complex I 20 kDa subunit family. In terms of assembly, NDH-1 can be composed of about 15 different subunits; different subcomplexes with different compositions have been identified which probably have different functions. Requires [4Fe-4S] cluster as cofactor.

It localises to the cellular thylakoid membrane. It catalyses the reaction a plastoquinone + NADH + (n+1) H(+)(in) = a plastoquinol + NAD(+) + n H(+)(out). The catalysed reaction is a plastoquinone + NADPH + (n+1) H(+)(in) = a plastoquinol + NADP(+) + n H(+)(out). Its function is as follows. NDH-1 shuttles electrons from an unknown electron donor, via FMN and iron-sulfur (Fe-S) centers, to quinones in the respiratory and/or the photosynthetic chain. The immediate electron acceptor for the enzyme in this species is believed to be plastoquinone. Couples the redox reaction to proton translocation, and thus conserves the redox energy in a proton gradient. Cyanobacterial NDH-1 also plays a role in inorganic carbon-concentration. The protein is NAD(P)H-quinone oxidoreductase subunit K of Crocosphaera subtropica (strain ATCC 51142 / BH68) (Cyanothece sp. (strain ATCC 51142)).